The sequence spans 96 residues: Small ribosomal subunit protein bS6 (96 aa).

The protein belongs to the bacterial ribosomal protein bS6 family.

Functionally, binds together with bS18 to 16S ribosomal RNA. The chain is Small ribosomal subunit protein bS6 from Corynebacterium aurimucosum (strain ATCC 700975 / DSM 44827 / CIP 107346 / CN-1) (Corynebacterium nigricans).